We begin with the raw amino-acid sequence, 333 residues long: Uroporphyrinogen decarboxylase (333 aa).

Residues 22 to 26, Asp-71, Tyr-145, Ser-200, and His-310 each bind substrate; that span reads RQAGR.

This sequence belongs to the uroporphyrinogen decarboxylase family. As to quaternary structure, homodimer.

Its subcellular location is the cytoplasm. The catalysed reaction is uroporphyrinogen III + 4 H(+) = coproporphyrinogen III + 4 CO2. Its pathway is porphyrin-containing compound metabolism; protoporphyrin-IX biosynthesis; coproporphyrinogen-III from 5-aminolevulinate: step 4/4. Catalyzes the decarboxylation of four acetate groups of uroporphyrinogen-III to yield coproporphyrinogen-III. The sequence is that of Uroporphyrinogen decarboxylase from Thermoplasma acidophilum (strain ATCC 25905 / DSM 1728 / JCM 9062 / NBRC 15155 / AMRC-C165).